Here is a 191-residue protein sequence, read N- to C-terminus: Protein GrpE (191 aa).

Belongs to the GrpE family. In terms of assembly, homodimer.

It is found in the cytoplasm. Functionally, participates actively in the response to hyperosmotic and heat shock by preventing the aggregation of stress-denatured proteins, in association with DnaK and GrpE. It is the nucleotide exchange factor for DnaK and may function as a thermosensor. Unfolded proteins bind initially to DnaJ; upon interaction with the DnaJ-bound protein, DnaK hydrolyzes its bound ATP, resulting in the formation of a stable complex. GrpE releases ADP from DnaK; ATP binding to DnaK triggers the release of the substrate protein, thus completing the reaction cycle. Several rounds of ATP-dependent interactions between DnaJ, DnaK and GrpE are required for fully efficient folding. This Listeria monocytogenes serotype 4b (strain CLIP80459) protein is Protein GrpE.